We begin with the raw amino-acid sequence, 198 residues long: Putative transposase InsO for insertion sequence element IS911B (198 aa).

Residues 105-198 (AVTEPNQVWC…YCGDTGSGRV (94 aa)) enclose the Integrase catalytic domain.

Functionally, involved in the transposition of the insertion sequence IS911B. The polypeptide is Putative transposase InsO for insertion sequence element IS911B (insO2) (Escherichia coli (strain K12)).